The chain runs to 98 residues: NADH-ubiquinone oxidoreductase chain 4L (98 aa).

3 consecutive transmembrane segments (helical) span residues 2-22, 26-46, and 59-79; these read SPAVLNITMAFTFSLLGTLMF, LMSTLLCLEGMMLSLFMLATI, and IPIAILVFAACEAAVGLALLA.

This sequence belongs to the complex I subunit 4L family. Core subunit of respiratory chain NADH dehydrogenase (Complex I) which is composed of 45 different subunits.

It localises to the mitochondrion inner membrane. It catalyses the reaction a ubiquinone + NADH + 5 H(+)(in) = a ubiquinol + NAD(+) + 4 H(+)(out). Functionally, core subunit of the mitochondrial membrane respiratory chain NADH dehydrogenase (Complex I) which catalyzes electron transfer from NADH through the respiratory chain, using ubiquinone as an electron acceptor. Part of the enzyme membrane arm which is embedded in the lipid bilayer and involved in proton translocation. The sequence is that of NADH-ubiquinone oxidoreductase chain 4L (MT-ND4L) from Alexandromys kikuchii (Taiwan vole).